Here is an 86-residue protein sequence, read N- to C-terminus: Large ribosomal subunit protein bL27 (86 aa).

This sequence belongs to the bacterial ribosomal protein bL27 family.

This is Large ribosomal subunit protein bL27 from Xanthomonas axonopodis pv. citri (strain 306).